A 112-amino-acid polypeptide reads, in one-letter code: U-scoloptoxin(16)-Er5a (112 aa).

The signal sequence occupies residues 1 to 26 (MNTVSVVQFLAVGCAVFVLYGRGVFA).

Belongs to the scoloptoxin-16 family. Post-translationally, contains 2 disulfide bonds. As to expression, expressed by the venom gland.

It is found in the secreted. This Ethmostigmus rubripes (Giant centipede) protein is U-scoloptoxin(16)-Er5a.